Consider the following 244-residue polypeptide: 5-oxoprolinase subunit A (244 aa).

It belongs to the LamB/PxpA family. Forms a complex composed of PxpA, PxpB and PxpC.

The catalysed reaction is 5-oxo-L-proline + ATP + 2 H2O = L-glutamate + ADP + phosphate + H(+). Catalyzes the cleavage of 5-oxoproline to form L-glutamate coupled to the hydrolysis of ATP to ADP and inorganic phosphate. This Salmonella paratyphi C (strain RKS4594) protein is 5-oxoprolinase subunit A.